Consider the following 284-residue polypeptide: uncharacterized protein (284 aa).

A signal peptide spans 1-24 (MLYSRESRTTVLFLALVTSLTVLC). Residues 25–84 (HSVDVTTVFTTSTITEITTVTAAPQPQNKAETALNTATNIIQTMQFLFNCAPFKWKGPLK) are Cytoplasmic-facing. The helical transmembrane segment at 85-104 (ITSCALNFIVLLLTAWGYLL) threads the bilayer. Residues 105–284 (KYLQENKLNS…SVHMYSSSLL (180 aa)) are Extracellular-facing. An N-linked (GlcNAc...) asparagine glycan is attached at Asn270.

It to yeast YNL033w.

Its subcellular location is the cell membrane. This is an uncharacterized protein from Saccharomyces cerevisiae (strain ATCC 204508 / S288c) (Baker's yeast).